An 83-amino-acid polypeptide reads, in one-letter code: uncharacterized protein (83 aa).

The chain crosses the membrane as a helical span at residues 50-70 (IMVFLGEAWIILIPFAIFCII).

It belongs to the plectrovirus ORF7 family.

Its subcellular location is the host membrane. This is an uncharacterized protein from Spiroplasma melliferum (SpV1).